The chain runs to 416 residues: uncharacterized protein (416 aa).

The region spanning 3–150 (LDVRTITPSE…SVYRAGLDAR (148 aa)) is the N-acetyltransferase domain. Acetyl-CoA is bound by residues 83-85 (VTV) and 91-96 (RRGLLS). The active-site Proton donor is Tyr-124. Phe-416 serves as the catalytic Proton acceptor; via carboxylate.

It belongs to the acetyltransferase Eis family. In terms of assembly, homohexamer; trimer of dimers.

This is an uncharacterized protein from Streptomyces griseus subsp. griseus (strain JCM 4626 / CBS 651.72 / NBRC 13350 / KCC S-0626 / ISP 5235).